The chain runs to 514 residues: Probable E3 ubiquitin-protein ligase ARI10 (514 aa).

Acidic residues predominate over residues Met1–Asn18. A disordered region spans residues Met1–Ser26. The tract at residues Val117–Val322 is TRIAD supradomain. Zn(2+) contacts are provided by Cys121, Cys124, Cys138, His140, Cys143, Cys146, Cys166, Cys171, Cys210, Cys215, Cys231, Cys233, Cys238, Cys241, His246, Cys251, Cys278, and Cys281. An RING-type 1 zinc finger spans residues Cys121–Cys171. The IBR-type zinc finger occupies Asp190–Cys251. The RING-type 2; atypical zinc finger occupies Cys278–Cys308. Residue Cys291 is part of the active site. Positions 296, 300, 305, 308, 315, and 318 each coordinate Zn(2+).

This sequence belongs to the RBR family. Ariadne subfamily. It depends on Zn(2+) as a cofactor.

The enzyme catalyses [E2 ubiquitin-conjugating enzyme]-S-ubiquitinyl-L-cysteine + [acceptor protein]-L-lysine = [E2 ubiquitin-conjugating enzyme]-L-cysteine + [acceptor protein]-N(6)-ubiquitinyl-L-lysine.. It participates in protein modification; protein ubiquitination. Its function is as follows. Might act as an E3 ubiquitin-protein ligase, or as part of E3 complex, which accepts ubiquitin from specific E2 ubiquitin-conjugating enzymes and then transfers it to substrates. In Arabidopsis thaliana (Mouse-ear cress), this protein is Probable E3 ubiquitin-protein ligase ARI10 (ARI10).